Here is a 1090-residue protein sequence, read N- to C-terminus: Exocyst complex component SEC5B (1090 aa).

The segment covering 1 to 12 (MSSSDDLDEDEL) has biased composition (acidic residues). Residues 1–126 (MSSSDDLDED…ARKEDDRAWD (126 aa)) are disordered. Over residues 23–46 (RDVTYQKPPSANSRKPVTNLVQQP) the composition is skewed to polar residues. Over residues 52-62 (AAAPPSKGGAK) the composition is skewed to low complexity. Over residues 96 to 109 (GGGGDGGGGRGRGG) the composition is skewed to gly residues. Over residues 110 to 126 (SGKERGRARKEDDRAWD) the composition is skewed to basic and acidic residues. The residue at position 179 (serine 179) is a Phosphoserine. Polar residues predominate over residues 486 to 502 (VQLSDDTSSMEDNQVQV). 3 disordered regions span residues 486–511 (VQLS…ESAR), 984–1013 (ETVE…QSSV), and 1055–1090 (PVAK…PRRR). The span at 999–1010 (RGSEDAISDDKQ) shows a compositional bias: basic and acidic residues. The span at 1062-1071 (SRTSTDSPSR) shows a compositional bias: polar residues.

It belongs to the SEC5 family. As to quaternary structure, the exocyst complex is composed of SEC3, SEC5, SEC6, SEC8, SEC10, EXO70A1 and EXO84B.

In terms of biological role, component of the exocyst complex involved in the docking of exocytic vesicles with fusion sites on the plasma membrane during regulated or polarized secretion. Involved in polarized cell growth and organ morphogenesis. During cytokinesis, involved in cell plate initiation, cell plate maturation and formation of new primary cell wall. The chain is Exocyst complex component SEC5B (SEC5B) from Arabidopsis thaliana (Mouse-ear cress).